The chain runs to 342 residues: Zinc transporter ZIP11 (342 aa).

Transmembrane regions (helical) follow at residues Leu12–Phe32, Leu44–Val64, Gly72–Val92, Ile194–Val214, Phe263–Val285, Ile290–Met307, and Leu322–Gly342.

The protein belongs to the ZIP transporter (TC 2.A.5) family. As to expression, highly expressed in the testes and portions of the digestive system including the stomach, ileum and cecum. In contrast, expressed at very low levels in liver, duodenum, jejunum, and colon.

Its subcellular location is the cell membrane. It localises to the nucleus. It is found in the cytoplasm. The protein localises to the golgi apparatus. The enzyme catalyses Zn(2+)(in) = Zn(2+)(out). The catalysed reaction is Cu(2+)(in) = Cu(2+)(out). In terms of biological role, zinc importer that regulates cytosolic zinc concentration either via zinc influx from the extracellular compartment or efflux from intracellular organelles such as Golgi apparatus. May transport copper ions as well. The transport mechanism remains to be elucidated. The chain is Zinc transporter ZIP11 (Slc39a11) from Mus musculus (Mouse).